Reading from the N-terminus, the 260-residue chain is Indole-3-glycerol phosphate synthase (260 aa).

It belongs to the TrpC family.

It carries out the reaction 1-(2-carboxyphenylamino)-1-deoxy-D-ribulose 5-phosphate + H(+) = (1S,2R)-1-C-(indol-3-yl)glycerol 3-phosphate + CO2 + H2O. It participates in amino-acid biosynthesis; L-tryptophan biosynthesis; L-tryptophan from chorismate: step 4/5. This is Indole-3-glycerol phosphate synthase from Staphylococcus aureus (strain bovine RF122 / ET3-1).